A 443-amino-acid polypeptide reads, in one-letter code: NADH-quinone oxidoreductase subunit D 1 (443 aa).

It belongs to the complex I 49 kDa subunit family. In terms of assembly, NDH-1 is composed of 14 different subunits. Subunits NuoB, C, D, E, F, and G constitute the peripheral sector of the complex.

It is found in the cell membrane. The catalysed reaction is a quinone + NADH + 5 H(+)(in) = a quinol + NAD(+) + 4 H(+)(out). Its function is as follows. NDH-1 shuttles electrons from NADH, via FMN and iron-sulfur (Fe-S) centers, to quinones in the respiratory chain. The immediate electron acceptor for the enzyme in this species is believed to be a menaquinone. Couples the redox reaction to proton translocation (for every two electrons transferred, four hydrogen ions are translocated across the cytoplasmic membrane), and thus conserves the redox energy in a proton gradient. This Streptomyces avermitilis (strain ATCC 31267 / DSM 46492 / JCM 5070 / NBRC 14893 / NCIMB 12804 / NRRL 8165 / MA-4680) protein is NADH-quinone oxidoreductase subunit D 1.